A 550-amino-acid polypeptide reads, in one-letter code: MAPDFPWLTAIIALPALSTLLIPLLPDKEGKTVRWYALIVGLVDFALMCFAFWQHFDPQATEFQLAESYRWLPSLGIQWSVAVDGISAPLVLLAGFVTTLAMFSAWQVNQRPRLFYALMLLLYSAQIGVFVAKDLFLFFLMWEIELIPVYLLVCIWGGKRRRYAAMKFLLYTAAASIFILVAALALSLNLPGGPNFDLGAIAQQDYPLGLQMWLYAGLLVSFGVKLAIFPLHTWLPDAHGEASSPVSMLLAGVLLKMGGYGLMRFNMELLPDAHVRFAPLLVILGVVNIVYGAFSSFGQTNMKRRLAYSSVSHMGFVLIGIASFTDLGINGAMLQMLSHGLIASVLFFLAGVTYDRTKTMVLAEVGGLGQVMPKVFAMFTVGALASLALPGMSGFVGELSVFVGLASSDTYSATFRTITVFLAAVGVILTPIYLLSMLREMFYTREMDLSCDLGQPTNVAIAGNAPVCFGNDCVLPSNAIYEDARPREIFIATCFTVLIIGVGLYPKLLMQMYDAKTQTLNTSVRQAQAIAKQPSEPIAALQAPELTMPH.

Helical transmembrane passes span 5 to 25 (FPWLTAIIALPALSTLLIPLL), 36 to 56 (YALIVGLVDFALMCFAFWQHF), 86 to 106 (ISAPLVLLAGFVTTLAMFSAW), 114 to 134 (LFYALMLLLYSAQIGVFVAKD), 135 to 155 (LFLFFLMWEIELIPVYLLVCI), 168 to 188 (FLLYTAAASIFILVAALALSL), 212 to 232 (MWLYAGLLVSFGVKLAIFPLH), 243 to 263 (SSPVSMLLAGVLLKMGGYGLM), 277 to 297 (FAPLLVILGVVNIVYGAFSSF), 311 to 331 (VSHMGFVLIGIASFTDLGING), 332 to 352 (AMLQMLSHGLIASVLFFLAGV), 375 to 395 (VFAMFTVGALASLALPGMSGF), 418 to 438 (ITVFLAAVGVILTPIYLLSML), and 489 to 509 (IFIATCFTVLIIGVGLYPKLL).

It belongs to the complex I subunit 4 family.

The protein resides in the cellular thylakoid membrane. The enzyme catalyses a plastoquinone + NADH + (n+1) H(+)(in) = a plastoquinol + NAD(+) + n H(+)(out). It catalyses the reaction a plastoquinone + NADPH + (n+1) H(+)(in) = a plastoquinol + NADP(+) + n H(+)(out). NDH-1 shuttles electrons from NAD(P)H, via FMN and iron-sulfur (Fe-S) centers, to quinones in the respiratory chain. The immediate electron acceptor for the enzyme in this species is believed to be plastoquinone. Couples the redox reaction to proton translocation (for every two electrons transferred, four hydrogen ions are translocated across the cytoplasmic membrane), and thus conserves the redox energy in a proton gradient. The chain is NAD(P)H-quinone oxidoreductase chain 4 3 from Picosynechococcus sp. (strain ATCC 27264 / PCC 7002 / PR-6) (Agmenellum quadruplicatum).